Reading from the N-terminus, the 174-residue chain is uncharacterized protein (174 aa).

An N-terminal signal peptide occupies residues 1–31; that stretch reads MCCVYRMNRPASGLTVVFCGKLSGKPGPKSA. Residues 39 to 59 form a disordered region; the sequence is KSGADDGGENPRFFSAGPRTE.

This is an uncharacterized protein from Escherichia coli (strain K12).